A 313-amino-acid chain; its full sequence is Protein FixB (313 aa).

255–283 (LYLAVGISGQIQHMVGANASQTIFAINKD) lines the FAD pocket.

This sequence belongs to the ETF alpha-subunit/FixB family. Heterodimer of FixA and FixB.

It participates in amine and polyamine metabolism; carnitine metabolism. Functionally, required for anaerobic carnitine reduction. May bring reductant to CaiA. The polypeptide is Protein FixB (Escherichia coli O1:K1 / APEC).